The sequence spans 550 residues: Membrane protein insertase YidC (550 aa).

Helical transmembrane passes span L6–Q26, V333–I353, V356–F376, L430–V450, P469–P489, and P504–V524.

This sequence belongs to the OXA1/ALB3/YidC family. Type 1 subfamily. As to quaternary structure, interacts with the Sec translocase complex via SecD. Specifically interacts with transmembrane segments of nascent integral membrane proteins during membrane integration.

It localises to the cell inner membrane. Functionally, required for the insertion and/or proper folding and/or complex formation of integral membrane proteins into the membrane. Involved in integration of membrane proteins that insert both dependently and independently of the Sec translocase complex, as well as at least some lipoproteins. Aids folding of multispanning membrane proteins. The protein is Membrane protein insertase YidC of Aromatoleum aromaticum (strain DSM 19018 / LMG 30748 / EbN1) (Azoarcus sp. (strain EbN1)).